Reading from the N-terminus, the 591-residue chain is Peroxisome assembly protein 2 (591 aa).

A disordered region spans residues 1-78; it reads MSDSDPKPTA…TNIDTNNNTN (78 aa). The Peroxisomal matrix segment spans residues 1–148; the sequence is MSDSDPKPTA…TSREGTRPAF (148 aa). Residues 7-26 show a composition bias toward low complexity; sequence KPTAAKGAAPTSIPNSTRNP. The span at 27–54 shows a compositional bias: pro residues; sequence NPTPPNPNPNPNPISTPAPTPTATPSPP. A compositionally biased stretch (low complexity) spans 55-78; it reads IASSSNNGNNSTRSTNIDTNNNTN. A helical membrane pass occupies residues 149–175; that stretch reads RVGQVDAELLDEELVELLRGQVREALR. Residues 176-196 are Cytoplasmic-facing; sequence YVGGGGGGGGGGGGGGVGSGV. The helical transmembrane segment at 197–222 threads the bilayer; that stretch reads AQDWEAEISLALRAVLFKLTVWDHDA. Over 223 to 246 the chain is Peroxisomal matrix; the sequence is TYGAALQNLKYTDARRDGPALAPP. The helical transmembrane segment at 247-273 threads the bilayer; the sequence is SRWQKALYGLVTVGGRYLWAKWEDWLL. Topologically, residues 274–283 are cytoplasmic; it reads EQDDGFEGPS. Residues 284-314 form a helical membrane-spanning segment; it reads PRVKRLARWTSALSTLHASAALVSFLVFLLH. Topologically, residues 315–341 are peroxisomal matrix; the sequence is GRYRTLLDRLLRMRLAPPTSQVSREVS. The chain crosses the membrane as a helical span at residues 342–365; the sequence is FEYLNRQLVWHAFTEFLLFVLPLV. Residues 366–591 are Cytoplasmic-facing; sequence GINRWRRWLA…EDGLDEDPES (226 aa). 8 residues coordinate Zn(2+): cysteine 408, cysteine 411, cysteine 449, cysteine 451, cysteine 454, cysteine 457, cysteine 472, and cysteine 475. The RING-type; atypical zinc finger occupies 408–475; the sequence is CAICYRDQNS…EGEGWPCLRC (68 aa). The segment at 512-591 is disordered; the sequence is KAPSDHEEEE…EDGLDEDPES (80 aa). Acidic residues-rich tracts occupy residues 517–537 and 575–591; these read HEEE…ENEG and SEDY…DPES.

This sequence belongs to the pex2/pex10/pex12 family. Component of the PEX2-PEX10-PEX12 retrotranslocation channel, composed of PEX2, PEX10 and PEX12.

The protein localises to the peroxisome membrane. It carries out the reaction [E2 ubiquitin-conjugating enzyme]-S-ubiquitinyl-L-cysteine + [acceptor protein]-L-cysteine = [E2 ubiquitin-conjugating enzyme]-L-cysteine + [acceptor protein]-S-ubiquitinyl-L-cysteine.. It participates in protein modification; protein ubiquitination. Its function is as follows. E3 ubiquitin-protein ligase component of a retrotranslocation channel required for peroxisome organization by mediating export of the PEX5 receptor from peroxisomes to the cytosol, thereby promoting PEX5 recycling. The retrotranslocation channel is composed of PEX2, PEX10 and PEX12; each subunit contributing transmembrane segments that coassemble into an open channel that specifically allows the passage of PEX5 through the peroxisomal membrane. PEX2 also regulates peroxisome organization by acting as a E3 ubiquitin-protein ligase. PEX2 ubiquitinates PEX5 during its passage through the retrotranslocation channel: catalyzes monoubiquitination of PEX5 at 'Cys-6', a modification that acts as a signal for PEX5 extraction into the cytosol. The protein is Peroxisome assembly protein 2 of Thermothelomyces thermophilus (strain ATCC 42464 / BCRC 31852 / DSM 1799) (Sporotrichum thermophile).